The sequence spans 711 residues: Methionine--tRNA ligase (711 aa).

Residues 15–25 carry the 'HIGH' region motif; that stretch reads PYTNGPIHIGH. 4 residues coordinate Zn(2+): Cys147, Cys150, Cys160, and Cys163. The 'KMSKS' region signature appears at 336-340; the sequence is KLSTS. Thr339 lines the ATP pocket. The tRNA-binding domain maps to 610-711; sequence DFAKMDIRIG…ADAPNGATVN (102 aa).

This sequence belongs to the class-I aminoacyl-tRNA synthetase family. MetG type 1 subfamily. In terms of assembly, homodimer. Zn(2+) is required as a cofactor.

It localises to the cytoplasm. The enzyme catalyses tRNA(Met) + L-methionine + ATP = L-methionyl-tRNA(Met) + AMP + diphosphate. Functionally, is required not only for elongation of protein synthesis but also for the initiation of all mRNA translation through initiator tRNA(fMet) aminoacylation. In Flavobacterium johnsoniae (strain ATCC 17061 / DSM 2064 / JCM 8514 / BCRC 14874 / CCUG 350202 / NBRC 14942 / NCIMB 11054 / UW101) (Cytophaga johnsonae), this protein is Methionine--tRNA ligase.